The primary structure comprises 390 residues: GTPase Obg (390 aa).

The 159-residue stretch at 1–159 (MKFVDEAAIL…RELMLELLLL (159 aa)) folds into the Obg domain. The OBG-type G domain maps to 160–333 (ADVGMLGLPN…LCWDVMSFLN (174 aa)). GTP is bound by residues 166 to 173 (GLPNAGKS), 191 to 195 (FTTLI), 213 to 216 (DIPG), 283 to 286 (NKID), and 314 to 316 (SAA). Mg(2+)-binding residues include Ser-173 and Thr-193. Over residues 364-384 (VEAEAEDDWDDDWDEEDDDGV) the composition is skewed to acidic residues. The tract at residues 364–390 (VEAEAEDDWDDDWDEEDDDGVEIIYER) is disordered.

Belongs to the TRAFAC class OBG-HflX-like GTPase superfamily. OBG GTPase family. Monomer. Mg(2+) is required as a cofactor.

Its subcellular location is the cytoplasm. Functionally, an essential GTPase which binds GTP, GDP and possibly (p)ppGpp with moderate affinity, with high nucleotide exchange rates and a fairly low GTP hydrolysis rate. Plays a role in control of the cell cycle, stress response, ribosome biogenesis and in those bacteria that undergo differentiation, in morphogenesis control. This is GTPase Obg from Yersinia pestis.